The chain runs to 507 residues: MKKVSINGNDLTLEEMIMVAREYCSITIEPEAMVRVANTRKVVERYVEEERVVYGITTGFGKFSDVAISKDQTEMLQRNLIISHACGVGEPLKEEVVRGVLLLRANALAKGYSGVRPNTLETLINMLNKGVHPIIPEKGSLGSSGDLAPLAHMVLVMMGEGEATYKGNKMSGKEAMEKAGIPPVVLSAKEGLALINGTQVMTAIGALLIYDCQKLIKLADIAGALTLEAQRGIIDAFDHKVHRVRPHQGQQQTAQNIVNLVAGSTLITRQGEVRVQDAYTLRCIPQIHGASRDAIMYAVDKVNIEINGATDNPLIFPEEDEVISGGNFHGQPMALTFDFLGIAIAELANVSERRIERLVNPQLSGLPAFLTAKGGLNSGFMITQYAAASLVSENKILAHPASVDSIPSSANQEDHVSMGTIAARKARSIYENTVNVLGVELMAASQAVEFYDGYELGIGTRRAYDTIRKSVAHLDEDRVMYVDMNRCAELVFNHKIVDEVEKVVSIL.

A cross-link (5-imidazolinone (Ser-Gly)) is located at residues 143 to 145 (SSG). A 2,3-didehydroalanine (Ser) modification is found at Ser144.

The protein belongs to the PAL/histidase family. In terms of processing, contains an active site 4-methylidene-imidazol-5-one (MIO), which is formed autocatalytically by cyclization and dehydration of residues Ser-Ser-Gly.

It localises to the cytoplasm. The catalysed reaction is L-histidine = trans-urocanate + NH4(+). Its pathway is amino-acid degradation; L-histidine degradation into L-glutamate; N-formimidoyl-L-glutamate from L-histidine: step 1/3. This Alkaliphilus metalliredigens (strain QYMF) protein is Histidine ammonia-lyase.